Here is a 1401-residue protein sequence, read N- to C-terminus: DNA-directed RNA polymerase subunit beta (1401 aa).

This sequence belongs to the RNA polymerase beta chain family. In terms of assembly, the RNAP catalytic core consists of 2 alpha, 1 beta, 1 beta' and 1 omega subunit. When a sigma factor is associated with the core the holoenzyme is formed, which can initiate transcription.

It carries out the reaction RNA(n) + a ribonucleoside 5'-triphosphate = RNA(n+1) + diphosphate. DNA-dependent RNA polymerase catalyzes the transcription of DNA into RNA using the four ribonucleoside triphosphates as substrates. The protein is DNA-directed RNA polymerase subunit beta of Desulforapulum autotrophicum (strain ATCC 43914 / DSM 3382 / VKM B-1955 / HRM2) (Desulfobacterium autotrophicum).